The following is a 338-amino-acid chain: GDSL esterase/lipase At5g63170 (338 aa).

Residues 1–23 (MNSLVIQTTIVLVSVISVSIVHA) form the signal peptide. Residue S35 is the Nucleophile of the active site. Active-site residues include D313 and H316.

Belongs to the 'GDSL' lipolytic enzyme family.

It localises to the secreted. In Arabidopsis thaliana (Mouse-ear cress), this protein is GDSL esterase/lipase At5g63170.